Reading from the N-terminus, the 225-residue chain is Fibronectin type III domain-containing protein (225 aa).

A signal peptide spans 1–17 (MFSFGIILLTVVSFTNA). One can recognise a Fibronectin type-III domain in the interval 106 to 206 (PPTNVIVEST…MPLNVKTPDI (101 aa)).

As to expression, component of the organic matrix of calcified shell layers like nacre and prisms.

The protein resides in the secreted. This is Fibronectin type III domain-containing protein from Mytilus californianus (California mussel).